A 467-amino-acid chain; its full sequence is Uronate isomerase (467 aa).

The protein belongs to the metallo-dependent hydrolases superfamily. Uronate isomerase family.

It carries out the reaction D-glucuronate = D-fructuronate. The enzyme catalyses aldehydo-D-galacturonate = keto-D-tagaturonate. It functions in the pathway carbohydrate metabolism; pentose and glucuronate interconversion. This is Uronate isomerase from Haemophilus influenzae (strain PittGG).